A 118-amino-acid chain; its full sequence is Small ribosomal subunit protein uS13 (118 aa).

The tract at residues 93–118 is disordered; sequence RGLPVRGQRTKTNARTRKGPRKPIRK.

This sequence belongs to the universal ribosomal protein uS13 family. Part of the 30S ribosomal subunit. Forms a loose heterodimer with protein S19. Forms two bridges to the 50S subunit in the 70S ribosome.

Its function is as follows. Located at the top of the head of the 30S subunit, it contacts several helices of the 16S rRNA. In the 70S ribosome it contacts the 23S rRNA (bridge B1a) and protein L5 of the 50S subunit (bridge B1b), connecting the 2 subunits; these bridges are implicated in subunit movement. Contacts the tRNAs in the A and P-sites. The protein is Small ribosomal subunit protein uS13 of Pseudomonas paraeruginosa (strain DSM 24068 / PA7) (Pseudomonas aeruginosa (strain PA7)).